Consider the following 290-residue polypeptide: ATP synthase gamma chain (290 aa).

The protein belongs to the ATPase gamma chain family. In terms of assembly, F-type ATPases have 2 components, CF(1) - the catalytic core - and CF(0) - the membrane proton channel. CF(1) has five subunits: alpha(3), beta(3), gamma(1), delta(1), epsilon(1). CF(0) has three main subunits: a, b and c.

It localises to the cell inner membrane. Produces ATP from ADP in the presence of a proton gradient across the membrane. The gamma chain is believed to be important in regulating ATPase activity and the flow of protons through the CF(0) complex. This Chelativorans sp. (strain BNC1) protein is ATP synthase gamma chain.